Consider the following 156-residue polypeptide: MPRRREVAKRVILPDPKFNDRVVAKLVNVIMVGGKKSTAERALYGALEVVSQKTGEEAVKVLKKCLDNIKPTLEVKSRRVGGSTYQVPVEVRADRRVSLAMRWLVKYANDRSEKTVTDKLAGEILDVYNNRGAAVKKREDTHRMAEANRAFAHYRW.

This sequence belongs to the universal ribosomal protein uS7 family. In terms of assembly, part of the 30S ribosomal subunit. Contacts proteins S9 and S11.

Its function is as follows. One of the primary rRNA binding proteins, it binds directly to 16S rRNA where it nucleates assembly of the head domain of the 30S subunit. Is located at the subunit interface close to the decoding center, probably blocks exit of the E-site tRNA. In Geobacter metallireducens (strain ATCC 53774 / DSM 7210 / GS-15), this protein is Small ribosomal subunit protein uS7.